Here is a 260-residue protein sequence, read N- to C-terminus: Putative imidazole glycerol phosphate synthase subunit hisF3 (260 aa).

Residue D135 is part of the active site.

The protein belongs to the HisA/HisF family. In terms of assembly, heterodimer of HisH and HisF.

It localises to the cytoplasm. It carries out the reaction 5-[(5-phospho-1-deoxy-D-ribulos-1-ylimino)methylamino]-1-(5-phospho-beta-D-ribosyl)imidazole-4-carboxamide + L-glutamine = D-erythro-1-(imidazol-4-yl)glycerol 3-phosphate + 5-amino-1-(5-phospho-beta-D-ribosyl)imidazole-4-carboxamide + L-glutamate + H(+). The protein operates within amino-acid biosynthesis; L-histidine biosynthesis; L-histidine from 5-phospho-alpha-D-ribose 1-diphosphate: step 5/9. Its function is as follows. IGPS catalyzes the conversion of PRFAR and glutamine to IGP, AICAR and glutamate. The HisF subunit catalyzes the cyclization activity that produces IGP and AICAR from PRFAR using the ammonia provided by the HisH subunit. The polypeptide is Putative imidazole glycerol phosphate synthase subunit hisF3 (hisF3) (Vibrio vulnificus (strain YJ016)).